Reading from the N-terminus, the 79-residue chain is Large ribosomal subunit protein uL24 (79 aa).

This sequence belongs to the universal ribosomal protein uL24 family. As to quaternary structure, part of the 50S ribosomal subunit.

One of two assembly initiator proteins, it binds directly to the 5'-end of the 23S rRNA, where it nucleates assembly of the 50S subunit. In terms of biological role, one of the proteins that surrounds the polypeptide exit tunnel on the outside of the subunit. The sequence is that of Large ribosomal subunit protein uL24 from Aliarcobacter butzleri (strain RM4018) (Arcobacter butzleri).